The primary structure comprises 404 residues: Tryptophan synthase beta chain (404 aa).

Residue K91 is modified to N6-(pyridoxal phosphate)lysine.

The protein belongs to the TrpB family. Tetramer of two alpha and two beta chains. It depends on pyridoxal 5'-phosphate as a cofactor.

The enzyme catalyses (1S,2R)-1-C-(indol-3-yl)glycerol 3-phosphate + L-serine = D-glyceraldehyde 3-phosphate + L-tryptophan + H2O. Its pathway is amino-acid biosynthesis; L-tryptophan biosynthesis; L-tryptophan from chorismate: step 5/5. Its function is as follows. The beta subunit is responsible for the synthesis of L-tryptophan from indole and L-serine. This Clavibacter michiganensis subsp. michiganensis (strain NCPPB 382) protein is Tryptophan synthase beta chain.